A 226-amino-acid polypeptide reads, in one-letter code: Late expression factor 7 (226 aa).

In terms of domain architecture, F-box spans 9–58 (RAKRIRLPLEIIDTILQYLDPILHAKVVGLTTRVKCRLLRDNNVEDYLKL).

Interacts with host S-phase kinase-associated protein 1/SKP1.

The protein localises to the host nucleus. The protein operates within protein degradation; proteasomal ubiquitin-dependent pathway. In terms of biological role, F-box protein that manipulates the host DNA damage response (DRR) in order to promote viral multiplication. Acts as a substrate recognition component of SKP1/Cullin/F-box (SCF) complexes for targeted protein polyubiquitination. This chain is Late expression factor 7 (LEF-7), found in Lepidoptera (butterflies and moths).